We begin with the raw amino-acid sequence, 195 residues long: dTTP/UTP pyrophosphatase (195 aa).

D76 serves as the catalytic Proton acceptor.

It belongs to the Maf family. YhdE subfamily. Requires a divalent metal cation as cofactor.

The protein localises to the cytoplasm. It catalyses the reaction dTTP + H2O = dTMP + diphosphate + H(+). The enzyme catalyses UTP + H2O = UMP + diphosphate + H(+). Functionally, nucleoside triphosphate pyrophosphatase that hydrolyzes dTTP and UTP. May have a dual role in cell division arrest and in preventing the incorporation of modified nucleotides into cellular nucleic acids. The protein is dTTP/UTP pyrophosphatase of Shewanella frigidimarina (strain NCIMB 400).